A 497-amino-acid polypeptide reads, in one-letter code: Trichoplein keratin filament-binding protein (497 aa).

Coiled coils occupy residues 67 to 140 (HCEK…LLYE), 166 to 271 (ATQK…ELGR), and 327 to 479 (MKQV…AKTM). An interaction with keratin proteins region spans residues 72-457 (KEEKRKILEL…WEAARQEEEE (386 aa)). Residues 167-188 (TQKEEKKQQEATEKQENKRLEN) form a disordered region. Residues 168-188 (QKEEKKQQEATEKQENKRLEN) show a composition bias toward basic and acidic residues. A trichohyalin/plectin homology domain region spans residues 258–424 (RQMAALRRKT…KQLAQRAKEE (167 aa)). The disordered stretch occupies residues 441–497 (AERQGQEWEAARQEEEEEEEARQAEEHSNALLQQEAKTMAEKGYQPKLHGHLRIAWD). Residues 444–453 (QGQEWEAARQ) show a composition bias toward basic and acidic residues. Over residues 488–497 (LHGHLRIAWD) the composition is skewed to basic residues.

This sequence belongs to the TCHP family. As to quaternary structure, interacts specifically with keratin proteins including, KRT5, KRT6A, KRT8, KRT14, KRT16 and KRT18. Interacts with KCTD17. In terms of processing, ubiquitinated. Ubiquitination by the BCR(KCTD17) E3 ubiquitin ligase complex results in proteasomal degradation, and induces ciliogenesis. Expressed in all tissues examined, including brain, liver, small intestine, large intestine, lung and heart. Found concentrated in tubular structures within hepatocytes, and in the apical cortical region and desmosomes of the apical junctional domain in enterocytes of the small intestine. In the hair follicle, localized at the outer root sheath. Also expressed in blood vessels (at protein level).

It is found in the cytoplasm. The protein resides in the cytoskeleton. It localises to the cell membrane. Its subcellular location is the mitochondrion. The protein localises to the microtubule organizing center. It is found in the centrosome. Tumor suppressor which has the ability to inhibit cell growth and be pro-apoptotic during cell stress. May act as a 'capping' or 'branching' protein for keratin filaments in the cell periphery. May regulate K8/K18 filament and desmosome organization mainly at the apical or peripheral regions of simple epithelial cells. Is a negative regulator of ciliogenesis. This Mus musculus (Mouse) protein is Trichoplein keratin filament-binding protein.